A 167-amino-acid polypeptide reads, in one-letter code: Protein-export protein SecB (167 aa).

This sequence belongs to the SecB family. As to quaternary structure, homotetramer, a dimer of dimers. One homotetramer interacts with 1 SecA dimer.

The protein resides in the cytoplasm. In terms of biological role, one of the proteins required for the normal export of preproteins out of the cell cytoplasm. It is a molecular chaperone that binds to a subset of precursor proteins, maintaining them in a translocation-competent state. It also specifically binds to its receptor SecA. The chain is Protein-export protein SecB from Idiomarina loihiensis (strain ATCC BAA-735 / DSM 15497 / L2-TR).